The following is a 187-amino-acid chain: Elongation factor P (187 aa).

Belongs to the elongation factor P family.

The protein resides in the cytoplasm. The protein operates within protein biosynthesis; polypeptide chain elongation. Its function is as follows. Involved in peptide bond synthesis. Stimulates efficient translation and peptide-bond synthesis on native or reconstituted 70S ribosomes in vitro. Probably functions indirectly by altering the affinity of the ribosome for aminoacyl-tRNA, thus increasing their reactivity as acceptors for peptidyl transferase. This is Elongation factor P from Fusobacterium nucleatum subsp. nucleatum (strain ATCC 25586 / DSM 15643 / BCRC 10681 / CIP 101130 / JCM 8532 / KCTC 2640 / LMG 13131 / VPI 4355).